A 298-amino-acid chain; its full sequence is GTPase Era (298 aa).

An Era-type G domain is found at 3–170 (KSGFVTIVGR…VELMKKAMPE (168 aa)). Residues 11-18 (GRPNVGKS) are G1. 11 to 18 (GRPNVGKS) contributes to the GTP binding site. The G2 stretch occupies residues 37–41 (QTTRN). Residues 58–61 (DTPG) are G3. Residues 58-62 (DTPGI) and 120-123 (NKVD) contribute to the GTP site. Residues 120–123 (NKVD) form a G4 region. Positions 149–151 (ISA) are G5. The KH type-2 domain occupies 201 to 278 (LRDEVPHGIA…NLKIWVKVRK (78 aa)).

This sequence belongs to the TRAFAC class TrmE-Era-EngA-EngB-Septin-like GTPase superfamily. Era GTPase family. In terms of assembly, monomer.

It is found in the cytoplasm. The protein localises to the cell membrane. An essential GTPase that binds both GDP and GTP, with rapid nucleotide exchange. Plays a role in 16S rRNA processing and 30S ribosomal subunit biogenesis and possibly also in cell cycle regulation and energy metabolism. This Clostridium beijerinckii (strain ATCC 51743 / NCIMB 8052) (Clostridium acetobutylicum) protein is GTPase Era.